Here is a 500-residue protein sequence, read N- to C-terminus: Zinc finger protein 689 (500 aa).

A disordered region spans residues 1–24; sequence MAPPSAPLLEQAPGEVGPTRRRGR. The 72-residue stretch at 29–100 folds into the KRAB domain; that stretch reads LKFADVAVYF…AALDPQEYRR (72 aa). The tract at residues 110 to 144 is disordered; it reads TRQKNEEKEVFPPKDVPRKGKRGRKPSKPRLIARQ. The span at 112 to 127 shows a compositional bias: basic and acidic residues; it reads QKNEEKEVFPPKDVPR. Positions 128 to 137 are enriched in basic residues; that stretch reads KGKRGRKPSK. The C2H2-type 1; degenerate zinc finger occupies 149-171; that stretch reads PICPDCGCTFPDLPALESHKCAQ. 10 C2H2-type zinc fingers span residues 177–199, 205–227, 233–255, 261–283, 289–311, 317–339, 345–367, 373–395, 401–423, and 429–451; these read YPCP…RRAH, YVCD…QVIH, YHCP…RTTH, HQCP…QRTH, YTCL…QRIH, YPCP…RRVH, YACE…QLLH, YPCP…RSTH, HACD…RRVH, and YACD…QLLH. Lys455 is covalently cross-linked (Glycyl lysine isopeptide (Lys-Gly) (interchain with G-Cter in SUMO2)). The C2H2-type 12 zinc finger occupies 457 to 482; sequence FPCLECGRCFRQRWSLAVHKCCPNTH.

This sequence belongs to the krueppel C2H2-type zinc-finger protein family.

It localises to the nucleus. Functionally, may be involved in transcriptional regulation. This chain is Zinc finger protein 689 (Znf689), found in Rattus norvegicus (Rat).